The primary structure comprises 94 residues: Pyrimidine/purine nucleoside phosphorylase (94 aa).

It belongs to the nucleoside phosphorylase PpnP family.

It catalyses the reaction a purine D-ribonucleoside + phosphate = a purine nucleobase + alpha-D-ribose 1-phosphate. The enzyme catalyses adenosine + phosphate = alpha-D-ribose 1-phosphate + adenine. The catalysed reaction is cytidine + phosphate = cytosine + alpha-D-ribose 1-phosphate. It carries out the reaction guanosine + phosphate = alpha-D-ribose 1-phosphate + guanine. It catalyses the reaction inosine + phosphate = alpha-D-ribose 1-phosphate + hypoxanthine. The enzyme catalyses thymidine + phosphate = 2-deoxy-alpha-D-ribose 1-phosphate + thymine. The catalysed reaction is uridine + phosphate = alpha-D-ribose 1-phosphate + uracil. It carries out the reaction xanthosine + phosphate = alpha-D-ribose 1-phosphate + xanthine. Catalyzes the phosphorolysis of diverse nucleosides, yielding D-ribose 1-phosphate and the respective free bases. Can use uridine, adenosine, guanosine, cytidine, thymidine, inosine and xanthosine as substrates. Also catalyzes the reverse reactions. This chain is Pyrimidine/purine nucleoside phosphorylase, found in Salmonella arizonae (strain ATCC BAA-731 / CDC346-86 / RSK2980).